The sequence spans 155 residues: MTIKTIEGTLDARNSRFALVVSRFNDFIGQKLVEGAVDCIVRHGGSEEQIALYKCPGAFELPSVAKKVAVSGRYDAVITLGAIIRGATSHYDVIAAEATKGVAQVGLDTMIPVTFGVLTTDNLEQAIERAGTKAGNKGFDAALAAIEMVNLYQQV.

Residues Phe24, 58–60 (AFE), and 82–84 (AII) contribute to the 5-amino-6-(D-ribitylamino)uracil site. Position 87–88 (87–88 (AT)) interacts with (2S)-2-hydroxy-3-oxobutyl phosphate. The Proton donor role is filled by His90. Phe115 serves as a coordination point for 5-amino-6-(D-ribitylamino)uracil. Arg129 contributes to the (2S)-2-hydroxy-3-oxobutyl phosphate binding site.

It belongs to the DMRL synthase family.

It carries out the reaction (2S)-2-hydroxy-3-oxobutyl phosphate + 5-amino-6-(D-ribitylamino)uracil = 6,7-dimethyl-8-(1-D-ribityl)lumazine + phosphate + 2 H2O + H(+). It functions in the pathway cofactor biosynthesis; riboflavin biosynthesis; riboflavin from 2-hydroxy-3-oxobutyl phosphate and 5-amino-6-(D-ribitylamino)uracil: step 1/2. Its function is as follows. Catalyzes the formation of 6,7-dimethyl-8-ribityllumazine by condensation of 5-amino-6-(D-ribitylamino)uracil with 3,4-dihydroxy-2-butanone 4-phosphate. This is the penultimate step in the biosynthesis of riboflavin. This chain is 6,7-dimethyl-8-ribityllumazine synthase, found in Prosthecochloris aestuarii (strain DSM 271 / SK 413).